The chain runs to 291 residues: 4-hydroxy-tetrahydrodipicolinate synthase (291 aa).

Pyruvate is bound at residue Thr-45. The Proton donor/acceptor role is filled by Tyr-133. Lys-161 acts as the Schiff-base intermediate with substrate in catalysis. Residue Ile-203 participates in pyruvate binding.

Belongs to the DapA family. As to quaternary structure, homotetramer; dimer of dimers.

It is found in the cytoplasm. It catalyses the reaction L-aspartate 4-semialdehyde + pyruvate = (2S,4S)-4-hydroxy-2,3,4,5-tetrahydrodipicolinate + H2O + H(+). It participates in amino-acid biosynthesis; L-lysine biosynthesis via DAP pathway; (S)-tetrahydrodipicolinate from L-aspartate: step 3/4. Catalyzes the condensation of (S)-aspartate-beta-semialdehyde [(S)-ASA] and pyruvate to 4-hydroxy-tetrahydrodipicolinate (HTPA). The polypeptide is 4-hydroxy-tetrahydrodipicolinate synthase (Neisseria meningitidis serogroup C (strain 053442)).